Here is a 1112-residue protein sequence, read N- to C-terminus: Cytosolic carboxypeptidase 4 (1112 aa).

The segment at 291-345 is disordered; that stretch reads TTEPPHDLPEEDFEDDGDDEVDKDSDTEDGKVEDDDLETDVNKLSSKPGLDRPEE. Acidic residues predominate over residues 299-329; it reads PEEDFEDDGDDEVDKDSDTEDGKVEDDDLET. The 291-residue stretch at 732 to 1022 folds into the Peptidase M14 domain; that stretch reads YPYTYTALMT…HPVDGLQGLQ (291 aa). The Zn(2+) site is built by H804, E807, and H901. E986 (proton donor/acceptor) is an active-site residue.

Belongs to the peptidase M14 family. Interacts with MYLK. Interacts with TCF4. Zn(2+) is required as a cofactor. Expressed in corneal endothelium.

The protein localises to the cytoplasm. Its subcellular location is the cytosol. The enzyme catalyses (L-glutamyl)(n+1)-gamma-L-glutamyl-L-glutamyl-[protein] + H2O = (L-glutamyl)(n)-gamma-L-glutamyl-L-glutamyl-[protein] + L-glutamate. The catalysed reaction is C-terminal L-alpha-aminoacyl-L-glutamyl-L-glutamyl-[tubulin] + H2O = C-terminal L-alpha-aminoacyl-L-glutamyl-[tubulin] + L-glutamate. Its function is as follows. Metallocarboxypeptidase that mediates deglutamylation of tubulin and non-tubulin target proteins. Catalyzes the removal of polyglutamate side chains present on the gamma-carboxyl group of glutamate residues within the C-terminal tail of tubulin protein. Specifically cleaves tubulin long-side-chains, while it is not able to remove the branching point glutamate. Also catalyzes the removal of polyglutamate residues from the carboxy-terminus of non-tubulin proteins such as MYLK. This Homo sapiens (Human) protein is Cytosolic carboxypeptidase 4.